The sequence spans 61 residues: Small ribosomal subunit protein uS14 (61 aa).

The Zn(2+) site is built by Cys-24, Cys-27, Cys-40, and Cys-43.

The protein belongs to the universal ribosomal protein uS14 family. Zinc-binding uS14 subfamily. In terms of assembly, part of the 30S ribosomal subunit. Contacts proteins S3 and S10. Requires Zn(2+) as cofactor.

Functionally, binds 16S rRNA, required for the assembly of 30S particles and may also be responsible for determining the conformation of the 16S rRNA at the A site. The chain is Small ribosomal subunit protein uS14 from Borrelia garinii subsp. bavariensis (strain ATCC BAA-2496 / DSM 23469 / PBi) (Borreliella bavariensis).